Consider the following 206-residue polypeptide: Ribosomal RNA large subunit methyltransferase E (206 aa).

5 residues coordinate S-adenosyl-L-methionine: glycine 60, tryptophan 62, aspartate 80, aspartate 96, and aspartate 121. The active-site Proton acceptor is lysine 161.

It belongs to the class I-like SAM-binding methyltransferase superfamily. RNA methyltransferase RlmE family.

The protein resides in the cytoplasm. The catalysed reaction is uridine(2552) in 23S rRNA + S-adenosyl-L-methionine = 2'-O-methyluridine(2552) in 23S rRNA + S-adenosyl-L-homocysteine + H(+). Specifically methylates the uridine in position 2552 of 23S rRNA at the 2'-O position of the ribose in the fully assembled 50S ribosomal subunit. In Francisella tularensis subsp. novicida (strain U112), this protein is Ribosomal RNA large subunit methyltransferase E.